Reading from the N-terminus, the 92-residue chain is Small ribosomal subunit protein uS19 (92 aa).

Belongs to the universal ribosomal protein uS19 family.

Protein S19 forms a complex with S13 that binds strongly to the 16S ribosomal RNA. This is Small ribosomal subunit protein uS19 from Wigglesworthia glossinidia brevipalpis.